We begin with the raw amino-acid sequence, 325 residues long: MTDVSRKIRAWGRRLMIGTAAAVVLPGLVGLAGGAATAGAFSRPGLPVEYLQVPSPSMGRDIKVQFQSGGNNSPAVYLLDGLRAQDDYNGWDINTPAFEWYYQSGLSIVMPVGGQSSFYSDWYSPACGKAGCQTYKWETFLTSELPQWLSANRAVKPTGSAAIGLSMAGSSAMILAAYHPQQFIYAGSLSALLDPSQGMGPSLIGLAMGDAGGYKAADMWGPSSDPAWERNDPTQQIPKLVANNTRLWVYCGNGTPNELGGANIPAEFLENFVRSSNLKFQDAYNAAGGHNAVFNFPPNGTHSWEYWGAQLNAMKGDLQSSLGAG.

The N-terminal stretch at methionine 1 to alanine 40 is a signal peptide. A substrate-binding site is contributed by leucine 82 to arginine 83. The segment at phenylalanine 98 to isoleucine 108 is fibronectin-binding. Cysteine 127 and cysteine 132 are joined by a disulfide. The substrate site is built by serine 166 and aspartate 194. Catalysis depends on serine 166, which acts as the Nucleophile. Residue glutamate 270 is part of the active site. Substrate-binding positions include phenylalanine 272 to serine 275, lysine 279, and histidine 302 to tryptophan 304. Residue histidine 302 is part of the active site.

Belongs to the mycobacterial A85 antigen family.

It localises to the secreted. The catalysed reaction is 2 alpha,alpha'-trehalose 6-mycolate = alpha,alpha'-trehalose 6,6'-bismycolate + alpha,alpha-trehalose. The enzyme catalyses an acyl-CoA + a 1,2-diacyl-sn-glycerol = a triacyl-sn-glycerol + CoA. Its function is as follows. The antigen 85 proteins (FbpA, FbpB, FbpC) are responsible for the high affinity of mycobacteria for fibronectin, a large adhesive glycoprotein, which facilitates the attachment of M.tuberculosis to murine alveolar macrophages (AMs). They also help to maintain the integrity of the cell wall by catalyzing the transfer of mycolic acids to cell wall arabinogalactan and through the synthesis of alpha,alpha-trehalose dimycolate (TDM, cord factor). They catalyze the transfer of a mycoloyl residue from one molecule of alpha,alpha-trehalose monomycolate (TMM) to another TMM, leading to the formation of TDM. This Mycobacterium tuberculosis (strain ATCC 25177 / H37Ra) protein is Diacylglycerol acyltransferase/mycolyltransferase Ag85B (fbpB).